A 206-amino-acid chain; its full sequence is Holliday junction branch migration complex subunit RuvA (206 aa).

The segment at 1–64 (MIGRLTGNLV…ETSQQLFGFI (64 aa)) is domain I. The interval 65–142 (DQQDREFFRM…SWQVTPSVDA (78 aa)) is domain II. The segment at 143 to 154 (TGSLVALDSAAP) is flexible linker. The domain III stretch occupies residues 155–206 (SQNAIVAEAESALVALGYKPVEASKAVARVTSDEITRSEDLIRLALRNMIPA).

It belongs to the RuvA family. In terms of assembly, homotetramer. Forms an RuvA(8)-RuvB(12)-Holliday junction (HJ) complex. HJ DNA is sandwiched between 2 RuvA tetramers; dsDNA enters through RuvA and exits via RuvB. An RuvB hexamer assembles on each DNA strand where it exits the tetramer. Each RuvB hexamer is contacted by two RuvA subunits (via domain III) on 2 adjacent RuvB subunits; this complex drives branch migration. In the full resolvosome a probable DNA-RuvA(4)-RuvB(12)-RuvC(2) complex forms which resolves the HJ.

The protein resides in the cytoplasm. Functionally, the RuvA-RuvB-RuvC complex processes Holliday junction (HJ) DNA during genetic recombination and DNA repair, while the RuvA-RuvB complex plays an important role in the rescue of blocked DNA replication forks via replication fork reversal (RFR). RuvA specifically binds to HJ cruciform DNA, conferring on it an open structure. The RuvB hexamer acts as an ATP-dependent pump, pulling dsDNA into and through the RuvAB complex. HJ branch migration allows RuvC to scan DNA until it finds its consensus sequence, where it cleaves and resolves the cruciform DNA. In Teredinibacter turnerae (strain ATCC 39867 / T7901), this protein is Holliday junction branch migration complex subunit RuvA.